The chain runs to 501 residues: Cilia- and flagella-associated protein 45 (501 aa).

The stretch at 75–114 forms a coiled coil; it reads MTAEDVAAAKREAEAKREQLQAVSKARKEKMLKLEEEAKK.

The protein belongs to the CFAP45 family.

It is found in the cell projection. Its subcellular location is the cilium. It localises to the flagellum. This chain is Cilia- and flagella-associated protein 45, found in Chlamydomonas reinhardtii (Chlamydomonas smithii).